A 122-amino-acid chain; its full sequence is Large ribosomal subunit protein bL12 (122 aa).

This sequence belongs to the bacterial ribosomal protein bL12 family. Homodimer. Part of the ribosomal stalk of the 50S ribosomal subunit. Forms a multimeric L10(L12)X complex, where L10 forms an elongated spine to which 2 to 4 L12 dimers bind in a sequential fashion. Binds GTP-bound translation factors.

In terms of biological role, forms part of the ribosomal stalk which helps the ribosome interact with GTP-bound translation factors. Is thus essential for accurate translation. This is Large ribosomal subunit protein bL12 from Levilactobacillus brevis (strain ATCC 367 / BCRC 12310 / CIP 105137 / JCM 1170 / LMG 11437 / NCIMB 947 / NCTC 947) (Lactobacillus brevis).